A 77-amino-acid chain; its full sequence is MAQQRRGGRRRKVDFIAANHIDYIDYKDVDLLKRFISERGKILPRRVTGTSAKNQRKLTVAIKRARVMGLLPFVAED.

This sequence belongs to the bacterial ribosomal protein bS18 family. In terms of assembly, part of the 30S ribosomal subunit. Forms a tight heterodimer with protein bS6.

Functionally, binds as a heterodimer with protein bS6 to the central domain of the 16S rRNA, where it helps stabilize the platform of the 30S subunit. The sequence is that of Small ribosomal subunit protein bS18 from Lactobacillus gasseri (strain ATCC 33323 / DSM 20243 / BCRC 14619 / CIP 102991 / JCM 1131 / KCTC 3163 / NCIMB 11718 / NCTC 13722 / AM63).